The sequence spans 380 residues: Flagellar P-ring protein (380 aa).

An N-terminal signal peptide occupies residues Met1–Ala35.

This sequence belongs to the FlgI family. The basal body constitutes a major portion of the flagellar organelle and consists of four rings (L,P,S, and M) mounted on a central rod.

Its subcellular location is the periplasm. The protein localises to the bacterial flagellum basal body. Assembles around the rod to form the L-ring and probably protects the motor/basal body from shearing forces during rotation. The chain is Flagellar P-ring protein from Gluconobacter oxydans (strain 621H) (Gluconobacter suboxydans).